Here is a 543-residue protein sequence, read N- to C-terminus: Zinc finger protein 34 (543 aa).

Positions 14–87 constitute a KRAB domain; that stretch reads VTFEDVAVFL…DMHGAEQPSV (74 aa). Residues 84-151 form a disordered region; sequence QPSVDGSAHG…PGEQRGPRLV (68 aa). A compositionally biased stretch (basic and acidic residues) spans 124–147; it reads EPGEVHERVREPEGRLDRPGEQRG. 12 C2H2-type zinc fingers span residues 179–201, 234–256, 262–284, 290–312, 318–340, 346–368, 374–396, 402–424, 430–452, 458–480, 486–508, and 514–536; these read HKCDICEQSFEQRSYLNNHKRVH, YYCGCCGKAFRYSANLVKHQRLH, YKCEECGKAFHQSCELISHRRMH, YRCDECGKTFNQRPNLMKHQRIH, YKCSECGKHFSAYSSLIYHQRIH, YKCSDCGKAFSDGSILIRHRRTH, YECKECGKGFTQSSNLIQHQRIH, YKCNECEKAFIQKTKLVEHQRSH, YECNDCGKVFSQSTHLIQHQRIH, YKCSECGKAFHNSSRLIHHQRSH, YKCADCKKAFSQGTYLLQHRRIH, and YTCGECGKAFRHSSNMSQHQRIH.

This sequence belongs to the krueppel C2H2-type zinc-finger protein family.

It localises to the nucleus. Functionally, may be involved in transcriptional regulation. This Bos taurus (Bovine) protein is Zinc finger protein 34 (ZNF34).